The sequence spans 135 residues: Large ribosomal subunit protein uL16c (135 aa).

It belongs to the universal ribosomal protein uL16 family. In terms of assembly, part of the 50S ribosomal subunit.

It is found in the plastid. The protein resides in the chloroplast. In Coffea arabica (Arabian coffee), this protein is Large ribosomal subunit protein uL16c.